The chain runs to 274 residues: Nickel/cobalt efflux system RcnA (274 aa).

Over 1–12 the chain is Periplasmic; the sequence is MGEFPTLLQQGN. A helical transmembrane segment spans residues 13–33; sequence GWFFIPSAILLGILHGLEPGH. At 34–51 the chain is on the cytoplasmic side; it reads SKTMMAAFIIAIKGTVKQ. The helical transmembrane segment at 52 to 72 threads the bilayer; that stretch reads AVMLGLAATLSHTAIVWLIAL. Residues 73–85 are Periplasmic-facing; sequence GGMYLSRAFTAQS. A helical membrane pass occupies residues 86–106; sequence VEPWLQLISAIIILSTACWMF. Residues 107–174 are Cytoplasmic-facing; the sequence is WRTWRGEQQW…FDGQTVTNGQ (68 aa). The span at 122–141 shows a compositional bias: basic and acidic residues; it reads HHDHDHDHDHDHDHHGHIHP. A disordered region spans residues 122-143; sequence HHDHDHDHDHDHDHHGHIHPEG. Residues 175 to 195 traverse the membrane as a helical segment; sequence ILLFGLTGGLIPCPAAITVLL. Residues 196 to 209 lie on the Periplasmic side of the membrane; the sequence is ICIQLKAFTLGATM. Residues 210–230 traverse the membrane as a helical segment; that stretch reads VLSFSLSLALTLVTVGVGAAI. Topologically, residues 231–251 are cytoplasmic; sequence SVQQAAKRWSGFSTLARRAPY. Residues 252 to 272 traverse the membrane as a helical segment; that stretch reads FSSILIGLVGVYMGIHGYTGI. The Periplasmic portion of the chain corresponds to 273–274; sequence MQ.

This sequence belongs to the NiCoT transporter (TC 2.A.52) family. RcnA subfamily.

It localises to the cell inner membrane. Its function is as follows. Efflux system for nickel and cobalt. This Salmonella paratyphi A (strain ATCC 9150 / SARB42) protein is Nickel/cobalt efflux system RcnA (rcnA).